The sequence spans 261 residues: 3beta-hydroxysteroid dehydrogenase 1 (261 aa).

NAD(+) is bound by residues aspartate 65–valine 66, asparagine 92, tyrosine 158, and lysine 162. Tyrosine 158 (proton acceptor) is an active-site residue.

The protein belongs to the short-chain dehydrogenases/reductases (SDR) family.

It carries out the reaction 3-oxo-5beta-cholan-24-oate + NADH + H(+) = isolithocholate + NAD(+). The enzyme catalyses 12alpha-hydroxy-3-oxo-5beta-cholan-24-oate + NADH + H(+) = isodeoxycholate + NAD(+). The catalysed reaction is 7alpha,12alpha-dihydroxy-3-oxo-5beta-cholan-24-oate + NADH + H(+) = isocholate + NAD(+). It catalyses the reaction 3-oxochenodeoxycholate + NADH + H(+) = isochenodeoxycholate + NAD(+). Its function is as follows. Involved in the modification of secondary bile acids into iso-bile acids (3beta-bile acids) via epimerization of the 3-OH group through a 3-oxo-intermediate. Catalyzes the reduction of 12-alpha-hydroxy-3-oxo-5-beta-cholan-24-oate (3-oxo-DCA) and 3-oxo-5-beta-cholan-24-oate (3-oxo-LCA) to yield isodeoxycholate (isoDCA) and isolithocholate (isoLCA), respectively. Is also able to catalyze the reduction of 3-dehydrocholate (3-oxo-CA or 7alpha,12alpha-dihydroxy-3-oxo-5beta-cholan-24-oate) and 7-alpha-hydroxy-3-oxo-5-beta-cholan-24-oate (3-oxo-CDCA), into isocholate (isoCA) and isochenodeoxycholate (isoCDCA), respectively. Prefers NADH to NADPH as cosubstrate. The conversion of the abundant bile acid deoxycholate (DCA) into isoDCA by the gut bacterium E.lenta favors the growth of the keystone commensal genus Bacteroides, since isoDCA is less cytotoxic than its parent compound, DCA; iso-bile acids have thus a potential role in modulating gut community composition. This chain is 3beta-hydroxysteroid dehydrogenase 1, found in Eggerthella lenta (strain ATCC 25559 / DSM 2243 / CCUG 17323 / JCM 9979 / KCTC 3265 / NCTC 11813 / VPI 0255 / 1899 B) (Eubacterium lentum).